Reading from the N-terminus, the 849-residue chain is Cytosolic phospholipase A2 zeta (849 aa).

The region spanning 27-145 is the C2 domain; that stretch reads EKRGPLWRHW…KCGQPHKHTF (119 aa). Residues aspartate 60, aspartate 66, aspartate 116, aspartate 118, and aspartate 123 each contribute to the Ca(2+) site. Positions 306-849 constitute a PLA2c domain; sequence EMSSGDLDLR…RHQARERAGA (544 aa). The Nucleophile role is filled by serine 395. The active-site Proton acceptor is the aspartate 680.

Requires Ca(2+) as cofactor. As to expression, expressed in myocardium (at protein level).

The protein resides in the cytoplasm. Its subcellular location is the cytosol. The protein localises to the cell membrane. It is found in the mitochondrion. The enzyme catalyses a 1,2-diacyl-sn-glycero-3-phosphocholine + H2O = a 1-acyl-sn-glycero-3-phosphocholine + a fatty acid + H(+). It carries out the reaction a 1-O-alkyl-2-acyl-sn-glycero-3-phosphocholine + H2O = a 1-O-alkyl-sn-glycero-3-phosphocholine + a fatty acid + H(+). The catalysed reaction is 1-hexadecanoyl-2-(9Z-octadecenoyl)-sn-glycero-3-phosphocholine + H2O = 2-(9Z-octadecenoyl)-sn-glycero-3-phosphocholine + hexadecanoate + H(+). It catalyses the reaction 1-hexadecanoyl-2-(9Z,12Z-octadecadienoyl)-sn-glycero-3-phosphocholine + H2O = (9Z,12Z)-octadecadienoate + 1-hexadecanoyl-sn-glycero-3-phosphocholine + H(+). The enzyme catalyses 1-hexadecanoyl-2-(5Z,8Z,11Z,14Z-eicosatetraenoyl)-sn-glycero-3-phosphocholine + H2O = 1-hexadecanoyl-sn-glycero-3-phosphocholine + (5Z,8Z,11Z,14Z)-eicosatetraenoate + H(+). It carries out the reaction 1-hexadecanoyl-2-(9Z,12Z-octadecadienoyl)-sn-glycero-3-phosphoethanolamine + H2O = 1-hexadecanoyl-sn-glycero-3-phosphoethanolamine + (9Z,12Z)-octadecadienoate + H(+). The catalysed reaction is 1-hexadecanoyl-2-(5Z,8Z,11Z,14Z-eicosatetraenoyl)-sn-glycero-3-phosphoethanolamine + H2O = 1-hexadecanoyl-sn-glycero-3-phosphoethanolamine + (5Z,8Z,11Z,14Z)-eicosatetraenoate + H(+). It catalyses the reaction 1-(5Z,8Z,11Z,14Z-eicosatetraenoyl)-2-O-hexadecyl-sn-glycero-3-phosphocholine + H2O = 2-O-hexadecyl-sn-glycero-3-phosphocholine + (5Z,8Z,11Z,14Z)-eicosatetraenoate + H(+). The enzyme catalyses 1-O-hexadecyl-2-(5Z,8Z,11Z,14Z)-eicosatetraenoyl-sn-glycero-3-phosphocholine + H2O = 1-O-hexadecyl-sn-glycero-3-phosphocholine + (5Z,8Z,11Z,14Z)-eicosatetraenoate + H(+). It carries out the reaction 1-hexadecanoyl-sn-glycero-3-phosphocholine + H2O = sn-glycerol 3-phosphocholine + hexadecanoate + H(+). Stimulated by cytosolic Ca(2+). Functionally, has calcium-dependent phospholipase and lysophospholipase activities with a potential role in membrane lipid remodeling and biosynthesis of lipid mediators. Preferentially hydrolyzes the ester bond of the fatty acyl group attached at sn-2 position of phospholipids (phospholipase A2 activity). Selectively hydrolyzes sn-2 arachidonoyl group from membrane phospholipids, providing the precursor for eicosanoid biosynthesis. In myocardial mitochondria, plays a major role in arachidonate release that is metabolically channeled to the formation of cardioprotective eicosanoids, epoxyeicosatrienoates (EETs). The chain is Cytosolic phospholipase A2 zeta (PLA2G4F) from Homo sapiens (Human).